The following is a 204-amino-acid chain: ADP-ribosylation factor-like protein 15 (204 aa).

Residues 39–46 (GLTGSGKT), 82–86 (ELGGA), and 142–145 (NHQD) each bind GTP.

It belongs to the small GTPase superfamily. Arf family.

This is ADP-ribosylation factor-like protein 15 (Arl15) from Mus musculus (Mouse).